The following is a 411-amino-acid chain: MVAEIICVGTELLLGQILNTNSQYLAQKLAELGIDLYFQTTVGDNMERLKMAIDIATKRSDVLIFTGGLGPTSDDITKEAVADYFGLTLVLDEDILRRIESFFERRQVKMPQINKKQAYVPEGAKVLHNKNGTAPGLIIEKDGKIAILLPGPPFEMQPMFEEEVLPYLEKFSKQKIYSRVLKFIGIGESSIEEALKDLILSQTDPTMALYAKPFEVELRITTKKESEELAKSLLQSMEYRIRERLGEYIYGVDRQLLEEVVIGLLTEKKLKVSVAESCTGGLICNKLTNVPGASEVFDRGFIVYSNEAKMKLLGVPEQVLKEHGAVSSQTARFMAQGALSNSLSDIALSVTGIAGPGGGSETKPVGLVYIGIATKDNVESFEFRFSGDRLRIKEMTSKAALNILRKKIIDY.

This sequence belongs to the CinA family.

The polypeptide is Putative competence-damage inducible protein (Caldicellulosiruptor bescii (strain ATCC BAA-1888 / DSM 6725 / KCTC 15123 / Z-1320) (Anaerocellum thermophilum)).